Consider the following 303-residue polypeptide: ATP synthase gamma chain (303 aa).

Belongs to the ATPase gamma chain family. F-type ATPases have 2 components, CF(1) - the catalytic core - and CF(0) - the membrane proton channel. CF(1) has five subunits: alpha(3), beta(3), gamma(1), delta(1), epsilon(1). CF(0) has three main subunits: a, b and c.

It localises to the cell inner membrane. In terms of biological role, produces ATP from ADP in the presence of a proton gradient across the membrane. The gamma chain is believed to be important in regulating ATPase activity and the flow of protons through the CF(0) complex. This chain is ATP synthase gamma chain, found in Bartonella quintana (strain Toulouse) (Rochalimaea quintana).